The chain runs to 296 residues: MTKKQLHLVIVTGMGGAGKTVAIQSFEDLGYFTIDNMPPALLPKFLQLVEIKEDNPKLALVVDMRSRSFFSEIQAVLDELENQDGLDFKILFLDAADKELVARYKETRRSHPLAADGRILDGIKLERELLAPLKNMSQNVVDTTELTPRELRKTLAEQFSDQEQAQSFRIEVMSFGFKYGIPIDADLVFDVRFLPNPYYLPELRNQTGVDEPVYDYVMNHPESEDFYQHLLALIEPILPSYQKEGKSVLTIAMGCTGGQHRSVAFAKRLVQDLSKNWSVNEGHRDKDRRKETVNRS.

13–20 contributes to the ATP binding site; it reads GMGGAGKT. 63-66 contacts GTP; the sequence is DMRS.

This sequence belongs to the RapZ-like family.

Displays ATPase and GTPase activities. This chain is Nucleotide-binding protein spr1424, found in Streptococcus pneumoniae (strain ATCC BAA-255 / R6).